Reading from the N-terminus, the 59-residue chain is Large ribosomal subunit protein uL30 (59 aa).

Belongs to the universal ribosomal protein uL30 family. As to quaternary structure, part of the 50S ribosomal subunit.

This Geobacter metallireducens (strain ATCC 53774 / DSM 7210 / GS-15) protein is Large ribosomal subunit protein uL30.